Reading from the N-terminus, the 37-residue chain is Large ribosomal subunit protein bL36c (37 aa).

The protein belongs to the bacterial ribosomal protein bL36 family.

The protein resides in the plastid. The protein localises to the chloroplast. The polypeptide is Large ribosomal subunit protein bL36c (Cucumis sativus (Cucumber)).